Here is a 120-residue protein sequence, read N- to C-terminus: Large ribosomal subunit protein bL20 (120 aa).

This sequence belongs to the bacterial ribosomal protein bL20 family.

Binds directly to 23S ribosomal RNA and is necessary for the in vitro assembly process of the 50S ribosomal subunit. It is not involved in the protein synthesizing functions of that subunit. This is Large ribosomal subunit protein bL20 from Cereibacter sphaeroides (strain ATCC 17025 / ATH 2.4.3) (Rhodobacter sphaeroides).